The following is a 688-amino-acid chain: T-box transcription factor TBX2-A (688 aa).

The T-box DNA-binding region spans 104 to 277 (LWDQFHKIGT…NNPFAKGFRD (174 aa)). 2 disordered regions span residues 301–436 (CKAD…GSLS) and 606–688 (PSTN…ETPK). Composition is skewed to basic and acidic residues over residues 340–361 (NNRE…EIRS), 378–403 (RLED…KDGS), and 412–430 (SLEK…KSDP). Positions 621 to 636 (PGSESSKPGSSRESSP) are enriched in low complexity. Residues 655–679 (ASMKDSINELQNIQRLVSGLESQRE) adopt a coiled-coil conformation. The span at 676–688 (SQREISPGRETPK) shows a compositional bias: basic and acidic residues.

As to quaternary structure, binds DNA as a monomer.

It is found in the nucleus. In terms of biological role, transcription factor which acts as a transcriptional repressor. May also function as a transcriptional activator. Binds to the palindromic T site 5'-TTCACACCTAGGTGTGAA-3' DNA sequence, or a half-site, which are present in the regulatory region of several genes. The sequence is that of T-box transcription factor TBX2-A (tbx2-a) from Xenopus laevis (African clawed frog).